The sequence spans 539 residues: Gamma-2-syntrophin (539 aa).

One can recognise a PDZ domain in the interval 73 to 156; that stretch reads TVTLRRQPVG…EVTITVEYLR (84 aa). 2 stretches are compositionally biased toward low complexity: residues 168 to 183 and 194 to 205; these read SPGPSSDHSSGASSPL and SSTTAPSSPSSP. Positions 168 to 209 are disordered; that stretch reads SPGPSSDHSSGASSPLFDSGLHLNGNSSTTAPSSPSSPIAKD. Positions 296-421 constitute a PH domain; the sequence is QVVHMGWVNE…WEKSFQRATF (126 aa).

Belongs to the syntrophin family. Interacts with the dystrophin protein DMD and related proteins DTNA and DTNB. In terms of tissue distribution, widely expressed. Strong expression in brain and testis. In CNS, it is expressed in the perikaryon and proximal portion of the neuronal processes. Strong expression in the hippocampus, neuron-rich dendate granule cells, and pyramidal cell layers. Highly expressed in neurons of the cerebral cortex. Also expressed in the cerebellar cortex, deep cerebellar nuclei, thalamus, and basal ganglia.

It is found in the cell membrane. The protein resides in the sarcolemma. Its subcellular location is the cytoplasm. It localises to the cytoskeleton. In terms of biological role, adapter protein that binds to and probably organizes the subcellular localization of a variety of proteins. May link various receptors to the actin cytoskeleton and the dystrophin glycoprotein complex. The polypeptide is Gamma-2-syntrophin (SNTG2) (Homo sapiens (Human)).